Reading from the N-terminus, the 549-residue chain is Glucose-6-phosphate isomerase (549 aa).

N6-acetyllysine occurs at positions 80, 228, and 234. Catalysis depends on E355, which acts as the Proton donor. Active-site residues include H386 and K514.

The protein belongs to the GPI family.

Its subcellular location is the cytoplasm. It carries out the reaction alpha-D-glucose 6-phosphate = beta-D-fructose 6-phosphate. The protein operates within carbohydrate biosynthesis; gluconeogenesis. It functions in the pathway carbohydrate degradation; glycolysis; D-glyceraldehyde 3-phosphate and glycerone phosphate from D-glucose: step 2/4. Functionally, catalyzes the reversible isomerization of glucose-6-phosphate to fructose-6-phosphate. This is Glucose-6-phosphate isomerase from Escherichia coli O139:H28 (strain E24377A / ETEC).